The primary structure comprises 274 residues: NADPH-dependent 7-cyano-7-deazaguanine reductase (274 aa).

80–82 (VES) contributes to the substrate binding site. 82–83 (SK) is a binding site for NADPH. Residue C181 is the Thioimide intermediate of the active site. D188 (proton donor) is an active-site residue. 220–221 (HE) is a binding site for substrate. 249–250 (RG) is an NADPH binding site.

This sequence belongs to the GTP cyclohydrolase I family. QueF type 2 subfamily. Homodimer.

The protein resides in the cytoplasm. It catalyses the reaction 7-aminomethyl-7-carbaguanine + 2 NADP(+) = 7-cyano-7-deazaguanine + 2 NADPH + 3 H(+). The protein operates within tRNA modification; tRNA-queuosine biosynthesis. Functionally, catalyzes the NADPH-dependent reduction of 7-cyano-7-deazaguanine (preQ0) to 7-aminomethyl-7-deazaguanine (preQ1). The chain is NADPH-dependent 7-cyano-7-deazaguanine reductase from Paraburkholderia phytofirmans (strain DSM 17436 / LMG 22146 / PsJN) (Burkholderia phytofirmans).